Reading from the N-terminus, the 245-residue chain is MTLTASSSSRAVTNSPVVVALDYHNCDDALSFVDKIDPRDCRLKVGKEMFTLFGPQFVRELQQRGFDIFLDLKFHDIPNTAAHAVAAAADLGVWMVNVHASGGARMMTAAREALVPFGKDAPLLIAVTVLTSMEASDLADLGVTLSPADYAERLAALTQKCGLDGVVCSAQEAVRFKQVFGQEFKLVTPGIRPQGSEAGDQRRIMTPEQALAAGVDYMVIGRPVTQSVDPAQTLKAINASLQRSA.

Substrate contacts are provided by residues aspartate 22, lysine 44, 71–80 (DLKFHDIPNT), threonine 131, arginine 192, glutamine 201, glycine 221, and arginine 222. Lysine 73 functions as the Proton donor in the catalytic mechanism.

Belongs to the OMP decarboxylase family. Type 1 subfamily. Homodimer.

The catalysed reaction is orotidine 5'-phosphate + H(+) = UMP + CO2. Its pathway is pyrimidine metabolism; UMP biosynthesis via de novo pathway; UMP from orotate: step 2/2. Functionally, catalyzes the decarboxylation of orotidine 5'-monophosphate (OMP) to uridine 5'-monophosphate (UMP). This chain is Orotidine 5'-phosphate decarboxylase, found in Shigella flexneri serotype 5b (strain 8401).